Reading from the N-terminus, the 172-residue chain is Large ribosomal subunit protein uL10 (172 aa).

The protein belongs to the universal ribosomal protein uL10 family. As to quaternary structure, part of the ribosomal stalk of the 50S ribosomal subunit. The N-terminus interacts with L11 and the large rRNA to form the base of the stalk. The C-terminus forms an elongated spine to which L12 dimers bind in a sequential fashion forming a multimeric L10(L12)X complex.

In terms of biological role, forms part of the ribosomal stalk, playing a central role in the interaction of the ribosome with GTP-bound translation factors. This chain is Large ribosomal subunit protein uL10, found in Ruegeria pomeroyi (strain ATCC 700808 / DSM 15171 / DSS-3) (Silicibacter pomeroyi).